Here is a 91-residue protein sequence, read N- to C-terminus: Large ribosomal subunit protein uL22 (91 aa).

This sequence belongs to the universal ribosomal protein uL22 family. As to quaternary structure, part of the 50S ribosomal subunit.

Its function is as follows. This protein binds specifically to 23S rRNA; its binding is stimulated by other ribosomal proteins, e.g. L4, L17, and L20. It is important during the early stages of 50S assembly. It makes multiple contacts with different domains of the 23S rRNA in the assembled 50S subunit and ribosome. Functionally, the globular domain of the protein is located near the polypeptide exit tunnel on the outside of the subunit, while an extended beta-hairpin is found that lines the wall of the exit tunnel in the center of the 70S ribosome. This Loofah witches'-broom phytoplasma protein is Large ribosomal subunit protein uL22 (rplV).